Here is a 192-residue protein sequence, read N- to C-terminus: Ribose 1,5-bisphosphate phosphokinase PhnN (192 aa).

15 to 22 is an ATP binding site; that stretch reads GPSGAGKD.

This sequence belongs to the ribose 1,5-bisphosphokinase family.

The catalysed reaction is alpha-D-ribose 1,5-bisphosphate + ATP = 5-phospho-alpha-D-ribose 1-diphosphate + ADP. The protein operates within metabolic intermediate biosynthesis; 5-phospho-alpha-D-ribose 1-diphosphate biosynthesis; 5-phospho-alpha-D-ribose 1-diphosphate from D-ribose 5-phosphate (route II): step 3/3. In terms of biological role, catalyzes the phosphorylation of ribose 1,5-bisphosphate to 5-phospho-D-ribosyl alpha-1-diphosphate (PRPP). The sequence is that of Ribose 1,5-bisphosphate phosphokinase PhnN from Brucella abortus biovar 1 (strain 9-941).